The primary structure comprises 754 residues: Protein tyrosine phosphatase domain-containing protein 1 (754 aa).

The Tyrosine-protein phosphatase domain occupies 82-253 (YSSWVTDNIL…LTPLRNIFSC (172 aa)). Catalysis depends on Cys-190, which acts as the Phosphocysteine intermediate. A phosphoserine mark is found at Ser-392 and Ser-394. The segment covering 487–498 (SGAFSADVSGSH) has biased composition (polar residues). A disordered region spans residues 487 to 554 (SGAFSADVSG…PRSPLDCGSS (68 aa)). Residue Ser-547 is modified to Phosphoserine.

This sequence belongs to the protein-tyrosine phosphatase family. Non-receptor class PTPDC1 subfamily.

Its function is as follows. May play roles in cilia formation and/or maintenance. This Homo sapiens (Human) protein is Protein tyrosine phosphatase domain-containing protein 1 (PTPDC1).